Consider the following 318-residue polypeptide: Phosphatidylglycerol--prolipoprotein diacylglyceryl transferase (318 aa).

3 consecutive transmembrane segments (helical) span residues G24–P44, L60–I80, and L115–T135. A 1,2-diacyl-sn-glycero-3-phospho-(1'-sn-glycerol) is bound at residue R164. 2 helical membrane-spanning segments follow: residues V198–F218 and G285–L305.

The protein belongs to the Lgt family.

The protein resides in the cell inner membrane. The enzyme catalyses L-cysteinyl-[prolipoprotein] + a 1,2-diacyl-sn-glycero-3-phospho-(1'-sn-glycerol) = an S-1,2-diacyl-sn-glyceryl-L-cysteinyl-[prolipoprotein] + sn-glycerol 1-phosphate + H(+). It functions in the pathway protein modification; lipoprotein biosynthesis (diacylglyceryl transfer). In terms of biological role, catalyzes the transfer of the diacylglyceryl group from phosphatidylglycerol to the sulfhydryl group of the N-terminal cysteine of a prolipoprotein, the first step in the formation of mature lipoproteins. The protein is Phosphatidylglycerol--prolipoprotein diacylglyceryl transferase of Leptospira interrogans serogroup Icterohaemorrhagiae serovar copenhageni (strain Fiocruz L1-130).